The sequence spans 664 residues: UvrABC system protein B (664 aa).

Residues 23-180 (EGLNRGMRFQ…EKLAKIGYQR (158 aa)) enclose the Helicase ATP-binding domain. ATP is bound at residue 36 to 43 (GVTGSGKT). The Beta-hairpin signature appears at 89–112 (YYDYYQPEAYIPTKDLYIEKNADI). A Helicase C-terminal domain is found at 426–588 (QVDDLINEIV…ITPRSIVKPL (163 aa)). A UVR domain is found at 622–657 (EEYVALLEEEMYRAASELRYEDAAALRDELFRVKET).

This sequence belongs to the UvrB family. In terms of assembly, forms a heterotetramer with UvrA during the search for lesions. Interacts with UvrC in an incision complex.

Its subcellular location is the cytoplasm. Functionally, the UvrABC repair system catalyzes the recognition and processing of DNA lesions. A damage recognition complex composed of 2 UvrA and 2 UvrB subunits scans DNA for abnormalities. Upon binding of the UvrA(2)B(2) complex to a putative damaged site, the DNA wraps around one UvrB monomer. DNA wrap is dependent on ATP binding by UvrB and probably causes local melting of the DNA helix, facilitating insertion of UvrB beta-hairpin between the DNA strands. Then UvrB probes one DNA strand for the presence of a lesion. If a lesion is found the UvrA subunits dissociate and the UvrB-DNA preincision complex is formed. This complex is subsequently bound by UvrC and the second UvrB is released. If no lesion is found, the DNA wraps around the other UvrB subunit that will check the other stand for damage. The chain is UvrABC system protein B from Thermotoga neapolitana (strain ATCC 49049 / DSM 4359 / NBRC 107923 / NS-E).